A 381-amino-acid polypeptide reads, in one-letter code: Chorismate synthase (381 aa).

The NADP(+) site is built by R39 and R45. Residues 127–129, 248–249, G293, 308–312, and R334 contribute to the FMN site; these read RAS, QS, and KPIPT.

The protein belongs to the chorismate synthase family. In terms of assembly, homotetramer. FMNH2 is required as a cofactor.

The catalysed reaction is 5-O-(1-carboxyvinyl)-3-phosphoshikimate = chorismate + phosphate. It participates in metabolic intermediate biosynthesis; chorismate biosynthesis; chorismate from D-erythrose 4-phosphate and phosphoenolpyruvate: step 7/7. In terms of biological role, catalyzes the anti-1,4-elimination of the C-3 phosphate and the C-6 proR hydrogen from 5-enolpyruvylshikimate-3-phosphate (EPSP) to yield chorismate, which is the branch point compound that serves as the starting substrate for the three terminal pathways of aromatic amino acid biosynthesis. This reaction introduces a second double bond into the aromatic ring system. The chain is Chorismate synthase from Caldicellulosiruptor saccharolyticus (strain ATCC 43494 / DSM 8903 / Tp8T 6331).